The sequence spans 198 residues: MFLFGKQKTPKEVLRENQRNLNKSMREIDRERVALQNQEKKIILDIKKMAKQGQMNSAKIMAKDLVRTRYHIQKFYEMKTQLQAVSLRIQTLQSTQAMAEAMKGVTKAMITMNRQMNLPQFTKIMMEFEQQSDKMDMKEEMMNDTMDQVMEQDGEEEQSQEILNQVLDEIGIDLASQLVDAPTTVGTSVASKHQVNSG.

Positions 11-42 (KEVLRENQRNLNKSMREIDRERVALQNQEKKI) form a coiled coil.

This sequence belongs to the SNF7 family. As to quaternary structure, probable core component of the endosomal sorting required for transport complex III (ESCRT-III). ESCRT-III components are thought to multimerize to form a flat lattice on the perimeter membrane of the endosome.

It is found in the endosome membrane. In terms of biological role, probable core component of the endosomal sorting required for transport complex III (ESCRT-III) which is involved in multivesicular bodies (MVBs) formation and sorting of endosomal cargo proteins into MVBs. MVBs contain intraluminal vesicles (ILVs) that are generated by invagination and scission from the limiting membrane of the endosome and are delivered to lysosomes enabling degradation of membrane proteins. In Dictyostelium discoideum (Social amoeba), this protein is Charged multivesicular body protein 2a homolog 2 (chmp2a2).